A 2210-amino-acid polypeptide reads, in one-letter code: Filamin-A (2210 aa).

2 consecutive Calponin-homology (CH) domains span residues 15-120 (KIQQ…LHYS) and 139-242 (HTPK…NSKL). Filamin repeat units follow at residues 249 to 347 (RPKT…PVKV), 349 to 447 (GHAG…PVKV), 448 to 544 (APLS…EVKV), 545 to 635 (GPKK…IAQI), 638 to 734 (RTDF…RVYV), 735 to 831 (GVPV…VVVE), 832 to 929 (QTVD…VVNV), 930 to 1022 (KSGC…RVLV), 1023 to 1121 (EETV…VMTV), 1122 to 1217 (FPKS…KLEA), 1218 to 1312 (FPTG…SIKA), 1322 to 1423 (SEYI…KFHV), 1424 to 1515 (DSIT…FAKI), 1516 to 1603 (TGEG…KVTV), 1606 to 1698 (REVG…TVKV), 1699 to 1796 (AGEG…QFTV), 1799 to 1891 (LRDS…KVYV), 1893 to 1986 (PDAG…RIKV), 1988 to 2079 (KDVA…KVNA), and 2116 to 2210 (TFKS…QIDV).

Belongs to the filamin family. As to quaternary structure, interacts with Ten-m. As to expression, germline-specific in females (at protein level). Expressed in ovary.

The protein localises to the cytoplasm. It is found in the cytoskeleton. The protein resides in the cell membrane. In terms of biological role, involved in the germline ring canal formation. May tether actin microfilament within the ovarian ring canal to the cell membrane. Contributes to actin microfilaments organization. This chain is Filamin-A (cher), found in Drosophila melanogaster (Fruit fly).